The sequence spans 117 residues: uncharacterized protein (117 aa).

The first 22 residues, 1–22, serve as a signal peptide directing secretion; the sequence is MHVKYLAGIVGAALLMAGCSSS.

This is an uncharacterized protein from Escherichia coli O6:H1 (strain CFT073 / ATCC 700928 / UPEC).